The primary structure comprises 219 residues: UPF0502 protein GSU0233 (219 aa).

Belongs to the UPF0502 family.

The polypeptide is UPF0502 protein GSU0233 (Geobacter sulfurreducens (strain ATCC 51573 / DSM 12127 / PCA)).